The chain runs to 467 residues: Fumarate hydratase class II (467 aa).

Substrate-binding positions include 99–101, 130–133, 140–142, and Thr188; these read SGT, HPND, and SSN. His189 serves as the catalytic Proton donor/acceptor. Ser319 is an active-site residue. Residues Ser320 and 325–327 each bind substrate; that span reads KVN.

It belongs to the class-II fumarase/aspartase family. Fumarase subfamily. In terms of assembly, homotetramer.

It is found in the cytoplasm. It carries out the reaction (S)-malate = fumarate + H2O. It functions in the pathway carbohydrate metabolism; tricarboxylic acid cycle; (S)-malate from fumarate: step 1/1. In terms of biological role, involved in the TCA cycle. Catalyzes the stereospecific interconversion of fumarate to L-malate. The protein is Fumarate hydratase class II of Thermosynechococcus vestitus (strain NIES-2133 / IAM M-273 / BP-1).